A 526-amino-acid chain; its full sequence is Cytochrome P450 4F5 (526 aa).

Cys470 serves as a coordination point for heme.

This sequence belongs to the cytochrome P450 family. The cofactor is heme. As to expression, high expression in liver and kidney. Lower expression in brain.

The protein localises to the endoplasmic reticulum membrane. The protein resides in the microsome membrane. The catalysed reaction is an organic molecule + reduced [NADPH--hemoprotein reductase] + O2 = an alcohol + oxidized [NADPH--hemoprotein reductase] + H2O + H(+). This Rattus norvegicus (Rat) protein is Cytochrome P450 4F5 (Cyp4f5).